The following is a 470-amino-acid chain: Uronate isomerase (470 aa).

Belongs to the metallo-dependent hydrolases superfamily. Uronate isomerase family.

The catalysed reaction is D-glucuronate = D-fructuronate. The enzyme catalyses aldehydo-D-galacturonate = keto-D-tagaturonate. The protein operates within carbohydrate metabolism; pentose and glucuronate interconversion. The chain is Uronate isomerase from Shigella boydii serotype 4 (strain Sb227).